The following is a 566-amino-acid chain: Arginine--tRNA ligase (566 aa).

The 'HIGH' region motif lies at A121 to H131.

It belongs to the class-I aminoacyl-tRNA synthetase family.

Its subcellular location is the cytoplasm. It catalyses the reaction tRNA(Arg) + L-arginine + ATP = L-arginyl-tRNA(Arg) + AMP + diphosphate. The chain is Arginine--tRNA ligase from Methanococcus maripaludis (strain C7 / ATCC BAA-1331).